The chain runs to 962 residues: MVANEQQQQQQEEERKEVKLIQSPNDNNKYRYVKLKNGLEVVLVSDETTDQSSCCLSINIGSLCNPREIEGLAHFLEHMLFLGTEKFPVEKEFVNFIYLNGGSYNGTTSPNKTNYYFTVNQESFEEALDRFSSFFISPLMNEDAVNRELNAVDSEHNNNMQKDFWRMDRIVNDQFEGHPMSMFFTGDSSTLKRDDIREKVVEFYQRYYSANLMKVCIFGRESLDQLEEYANKYFLPIVNKDVKVPKLPPLAITSKSIMIEAEPTQDMDLLKFVFPIPDEKLCFSKNYKNASASILSHILGHECQGSLFSVLFNKDYAFSLSISSNSFYENMNKIEIQIHLTKTGLENVDEVIALLFQSFEFDTPEYFFTEKKLLSEINWKSFQKSAPASTTQAITSNLFRVERPEETLKYNNFLEQFAPEKIKEIQSYLRPDNMICLFYSSTKFKGKTTEIEPHYKIKFNKRYIEQSDFDKWKSFPKNTNLFLPKENPFLPIDTTIKAPQDHSIHIPKEVYNNNGVKVYHSLDHRFNSPKARVNIRFELTSYGNNQSMVMWNLLKKSLKEVLNEKILYYLSVLDFSMKLQILTTHVELQCYCFNDIIFTALGKVFDFLMNLDLNDMQFKRIKEKVAKRFLSSHYLSPYQISMRHLSLHNFNCNSMLLDKQEYLKKVTKSEFLNYFKSLFSYINFSAMVVGNASIEDACAFGEKLNSFSNRNSACPGEVFKLARVNLPSNTITHQREFLYDTNQTNCSSSISFLIGQFNRKTYATTLVICSILGSAYFEELRTKKQFGYVVNCAQDCTGNAISMRCIVQSHTKTPEEIFDATMEFFVGFEKTLDYFKTSPSDFKDLIENCQKQNTVKQQSNSAQSSLYWSFFTFCGDFEFEKKKYEDIGKITFDDVKQYYLDHLSPNTANLRIFAAHCYPQSYQIPDEVKPFGNVKVNLLRKYEHDNFKENHGYLSSKVNLQK.

Over residues 1–10 (MVANEQQQQQ) the composition is skewed to low complexity. A disordered region spans residues 1 to 21 (MVANEQQQQQQEEERKEVKLI). H74 lines the Zn(2+) pocket. The active-site Proton acceptor is the E77. Positions 78 and 155 each coordinate Zn(2+).

This sequence belongs to the peptidase M16 family. In terms of assembly, homodimer. Zn(2+) is required as a cofactor.

The protein resides in the cytoplasm. In Dictyostelium discoideum (Social amoeba), this protein is Insulin-degrading enzyme homolog.